The following is a 371-amino-acid chain: Dual-specificity RNA methyltransferase RlmN (371 aa).

The active-site Proton acceptor is the Glu92. One can recognise a Radical SAM core domain in the interval Glu98 to Asp337. A disulfide bond links Cys105 and Cys342. [4Fe-4S] cluster contacts are provided by Cys112, Cys116, and Cys119. S-adenosyl-L-methionine contacts are provided by residues Gly166–Glu167, Ser198, Ser220–His222, and Asn299. The S-methylcysteine intermediate role is filled by Cys342.

It belongs to the radical SAM superfamily. RlmN family. It depends on [4Fe-4S] cluster as a cofactor.

The protein resides in the cytoplasm. The catalysed reaction is adenosine(2503) in 23S rRNA + 2 reduced [2Fe-2S]-[ferredoxin] + 2 S-adenosyl-L-methionine = 2-methyladenosine(2503) in 23S rRNA + 5'-deoxyadenosine + L-methionine + 2 oxidized [2Fe-2S]-[ferredoxin] + S-adenosyl-L-homocysteine. It catalyses the reaction adenosine(37) in tRNA + 2 reduced [2Fe-2S]-[ferredoxin] + 2 S-adenosyl-L-methionine = 2-methyladenosine(37) in tRNA + 5'-deoxyadenosine + L-methionine + 2 oxidized [2Fe-2S]-[ferredoxin] + S-adenosyl-L-homocysteine. Its function is as follows. Specifically methylates position 2 of adenine 2503 in 23S rRNA and position 2 of adenine 37 in tRNAs. m2A2503 modification seems to play a crucial role in the proofreading step occurring at the peptidyl transferase center and thus would serve to optimize ribosomal fidelity. The protein is Dual-specificity RNA methyltransferase RlmN of Actinobacillus succinogenes (strain ATCC 55618 / DSM 22257 / CCUG 43843 / 130Z).